Consider the following 365-residue polypeptide: Chorismate synthase (365 aa).

R46 is an NADP(+) binding site. FMN contacts are provided by residues R123–S125, N241–G242, G281, K296–S300, and R322.

It belongs to the chorismate synthase family. In terms of assembly, homotetramer. FMNH2 is required as a cofactor.

It carries out the reaction 5-O-(1-carboxyvinyl)-3-phosphoshikimate = chorismate + phosphate. It functions in the pathway metabolic intermediate biosynthesis; chorismate biosynthesis; chorismate from D-erythrose 4-phosphate and phosphoenolpyruvate: step 7/7. Its function is as follows. Catalyzes the anti-1,4-elimination of the C-3 phosphate and the C-6 proR hydrogen from 5-enolpyruvylshikimate-3-phosphate (EPSP) to yield chorismate, which is the branch point compound that serves as the starting substrate for the three terminal pathways of aromatic amino acid biosynthesis. This reaction introduces a second double bond into the aromatic ring system. The polypeptide is Chorismate synthase (Helicobacter pylori (strain G27)).